Consider the following 474-residue polypeptide: C6 finger domain transcription factor aclZ (474 aa).

Residues 42 to 69 constitute a DNA-binding region (zn(2)-C6 fungal-type); it reads CNQCHAAKVRCSGERTGCDRCNNLQYQC. Disordered regions lie at residues 85-148 and 177-206; these read RGNK…SHSA and MSSDQDPSRSRGHSLQAPSHSGHSIADSHT. Residues 90–105 are compositionally biased toward polar residues; the sequence is VRTTTEALQRPATAST. Over residues 117–138 the composition is skewed to basic and acidic residues; it reads TDQRSENDPLSRSDFGEQDAAH.

Its subcellular location is the nucleus. Functionally, transcription factor that specifically regulates the gene cluster that mediates the biosynthesis of aspirochlorine (or antibiotic A30641), an unusual halogenated spiro compound with distinctive antifungal properties due to selective inhibition of protein biosynthesis, and which is also active against bacteria, viruses, and murine tumor cells. The polypeptide is C6 finger domain transcription factor aclZ (Aspergillus oryzae (strain ATCC 42149 / RIB 40) (Yellow koji mold)).